Reading from the N-terminus, the 522-residue chain is MEYLPYIATSIACIVILRWALNMMQWLWFEPRRLEKLLRKQGLQGNSYKFLFGDMKESSMLRNEALAKPMPMPFDNDYFPRINPFVDQLLNKYGMNCFLWMGPVPAIQIGEPELVREAFNRMHEFQKPKTNPLSALLATGLVSYEGDKWAKHRRLINPSFHVEKLKLMIPAFRESIVEVVNQWEKKVPENGSAEIDVWPSLTSLTGDVISRAAFGSVYGDGRRIFELLAVQKELVLSLLKFSYIPGYTYLPTEGNKKMKAVNNEIQRLLENVIQNRKKAMEAGEAAKDDLLGLLMDSNYKESMLEGGGKNKKLIMSFQDLIDECKLFFLAGHETTAVLLVWTLILLCKHQDWQTKAREEVLATFGMSEPTDYDALNRLKIVTMILNEVLRLYPPVVSTNRKLFKGETKLGNLVIPPGVGISLLTIQANRDPKVWGEDASEFRPDRFAEGLVKATKGNVAFFPFGWGPRICIGQNFALTESKMAVAMILQRFTFDLSPSYTHAPSGLITLNPQYGAPLMFRRR.

Residues 4-24 (LPYIATSIACIVILRWALNMM) traverse the membrane as a helical; Signal-anchor for type II membrane protein segment. Residue Asn-190 is glycosylated (N-linked (GlcNAc...) asparagine). Cys-470 is a binding site for heme.

The protein belongs to the cytochrome P450 family. Requires heme as cofactor. As to expression, mainly expressed in flowers and flower buds, to a lesser extent in young leaves and, at low levels, in old leaves, stems and roots.

It is found in the membrane. Its pathway is secondary metabolite biosynthesis; terpenoid biosynthesis. Its function is as follows. Component of the oleanane-type triterpene saponins (e.g. saponarioside A and saponarioside B) biosynthetic pathway, leading to the production of natural products with detergent properties used as traditional sources of soap. An oxidoreductase that facilitates the oxidation of the methyl group to a carboxyl group at the C-23 position of echinocystic acid, resulting in the formation of quillaic acid (QA). This chain is Echinocystic acid 23-monooxygenase, found in Saponaria officinalis (Common soapwort).